The chain runs to 955 residues: Centrosomal protein of 112 kDa (955 aa).

Residues 277–954 adopt a coiled-coil conformation; that stretch reads QKHDADVQKI…QEELTTYQGR (678 aa).

It localises to the cytoplasm. The protein localises to the cytoskeleton. It is found in the microtubule organizing center. The protein resides in the centrosome. This is Centrosomal protein of 112 kDa (CEP112) from Homo sapiens (Human).